A 373-amino-acid chain; its full sequence is Dual-specificity RNA methyltransferase RlmN (373 aa).

Glutamate 94 (proton acceptor) is an active-site residue. One can recognise a Radical SAM core domain in the interval 100–339 (EDDRATLCVS…VIVRKTRGDD (240 aa)). Residues cysteine 107 and cysteine 344 are joined by a disulfide bond. Residues cysteine 114, cysteine 118, and cysteine 121 each contribute to the [4Fe-4S] cluster site. S-adenosyl-L-methionine is bound by residues 168 to 169 (GE), serine 200, 222 to 224 (SIH), and asparagine 301. The S-methylcysteine intermediate role is filled by cysteine 344.

This sequence belongs to the radical SAM superfamily. RlmN family. [4Fe-4S] cluster serves as cofactor.

The protein resides in the cytoplasm. The enzyme catalyses adenosine(2503) in 23S rRNA + 2 reduced [2Fe-2S]-[ferredoxin] + 2 S-adenosyl-L-methionine = 2-methyladenosine(2503) in 23S rRNA + 5'-deoxyadenosine + L-methionine + 2 oxidized [2Fe-2S]-[ferredoxin] + S-adenosyl-L-homocysteine. It catalyses the reaction adenosine(37) in tRNA + 2 reduced [2Fe-2S]-[ferredoxin] + 2 S-adenosyl-L-methionine = 2-methyladenosine(37) in tRNA + 5'-deoxyadenosine + L-methionine + 2 oxidized [2Fe-2S]-[ferredoxin] + S-adenosyl-L-homocysteine. Specifically methylates position 2 of adenine 2503 in 23S rRNA and position 2 of adenine 37 in tRNAs. m2A2503 modification seems to play a crucial role in the proofreading step occurring at the peptidyl transferase center and thus would serve to optimize ribosomal fidelity. This Shewanella sp. (strain MR-4) protein is Dual-specificity RNA methyltransferase RlmN.